We begin with the raw amino-acid sequence, 322 residues long: Tyrosine recombinase XerC (322 aa).

The segment at 1-25 (MPEAAPPVADARGSSPTATTGPGAD) is disordered. Residues 16–25 (PTATTGPGAD) are compositionally biased toward low complexity. Residues 25-111 (DATLSAVEPF…ACRSYYAWLL (87 aa)) enclose the Core-binding (CB) domain. Positions 132–309 (KLPQVLDADE…DFQHLAKVYD (178 aa)) constitute a Tyr recombinase domain. Active-site residues include R171, K195, H261, R264, and H287. The active-site O-(3'-phospho-DNA)-tyrosine intermediate is Y296.

The protein belongs to the 'phage' integrase family. XerC subfamily. In terms of assembly, forms a cyclic heterotetrameric complex composed of two molecules of XerC and two molecules of XerD.

It localises to the cytoplasm. Functionally, site-specific tyrosine recombinase, which acts by catalyzing the cutting and rejoining of the recombining DNA molecules. The XerC-XerD complex is essential to convert dimers of the bacterial chromosome into monomers to permit their segregation at cell division. It also contributes to the segregational stability of plasmids. The polypeptide is Tyrosine recombinase XerC (Xanthomonas campestris pv. campestris (strain 8004)).